Reading from the N-terminus, the 309-residue chain is 2-phospho-L-lactate transferase (309 aa).

7,8-didemethyl-8-hydroxy-5-deazariboflavin-binding residues include aspartate 50 and lysine 89.

Belongs to the CofD family. As to quaternary structure, homodimer. Mg(2+) is required as a cofactor.

It catalyses the reaction (2S)-lactyl-2-diphospho-5'-guanosine + 7,8-didemethyl-8-hydroxy-5-deazariboflavin = oxidized coenzyme F420-0 + GMP + H(+). Its pathway is cofactor biosynthesis; coenzyme F420 biosynthesis. In terms of biological role, catalyzes the transfer of the 2-phospholactate moiety from (2S)-lactyl-2-diphospho-5'-guanosine to 7,8-didemethyl-8-hydroxy-5-deazariboflavin (FO) with the formation of oxidized coenzyme F420-0 and GMP. This is 2-phospho-L-lactate transferase from Methanococcus maripaludis (strain C7 / ATCC BAA-1331).